A 192-amino-acid polypeptide reads, in one-letter code: Ion-translocating oxidoreductase complex subunit A (192 aa).

The next 6 membrane-spanning stretches (helical) occupy residues 5-25 (LLLL…FLGL), 39-59 (IGMS…SYLV), 65-85 (LPFE…AVVV), 102-122 (ALGI…VALL), 134-154 (AIYG…FSAM), and 171-191 (AIAM…TGLV).

It belongs to the NqrDE/RnfAE family. As to quaternary structure, the complex is composed of six subunits: RnfA, RnfB, RnfC, RnfD, RnfE and RnfG.

Its subcellular location is the cell inner membrane. Its function is as follows. Part of a membrane-bound complex that couples electron transfer with translocation of ions across the membrane. The sequence is that of Ion-translocating oxidoreductase complex subunit A from Shewanella sediminis (strain HAW-EB3).